A 97-amino-acid polypeptide reads, in one-letter code: Late transcription unit B protein (97 aa).

The chain is Late transcription unit B protein (ltuB) from Chlamydia muridarum (strain MoPn / Nigg).